A 628-amino-acid chain; its full sequence is tRNA uridine 5-carboxymethylaminomethyl modification enzyme MnmG (628 aa).

FAD-binding positions include 14–19 (GAGHAG), Val126, and Ser181. An NAD(+)-binding site is contributed by 273–287 (GPRYCPSIEDKVVRF). Gln370 lines the FAD pocket.

The protein belongs to the MnmG family. As to quaternary structure, homodimer. Heterotetramer of two MnmE and two MnmG subunits. Requires FAD as cofactor.

The protein resides in the cytoplasm. In terms of biological role, NAD-binding protein involved in the addition of a carboxymethylaminomethyl (cmnm) group at the wobble position (U34) of certain tRNAs, forming tRNA-cmnm(5)s(2)U34. This chain is tRNA uridine 5-carboxymethylaminomethyl modification enzyme MnmG, found in Pelobacter propionicus (strain DSM 2379 / NBRC 103807 / OttBd1).